A 186-amino-acid chain; its full sequence is Early nodulin-like protein 13 (186 aa).

The signal sequence occupies residues 1-23 (MAQRTLVATFFLIFFLLTNLVCS). Residues 24–128 (KEIIVGGKTS…GEKLHIVVMS (105 aa)) enclose the Phytocyanin domain. Cysteines 82 and 116 form a disulfide. 2 N-linked (GlcNAc...) asparagine glycosylation sites follow: Asn-83 and Asn-90. Ala-165 is lipidated: GPI-anchor amidated alanine. The propeptide at 166 to 186 (SSLTRQVGVLGFVGLLAIVLL) is removed in mature form.

It belongs to the early nodulin-like (ENODL) family. As to expression, mostly expressed in seedlings, siliques and flowers, and, to a lower extent, in roots, stems and seeds, but barely in leaves.

It is found in the cell membrane. May act as a carbohydrate transporter. Required, together with ENODL11, ENODL12, ENODL13, ENODL14 and ENODL15, for male-female communication and pollen tube reception and burst at the synergid cell surface of the female gametophyte. This Arabidopsis thaliana (Mouse-ear cress) protein is Early nodulin-like protein 13.